The primary structure comprises 164 residues: Large ribosomal subunit protein uL10 (164 aa).

This sequence belongs to the universal ribosomal protein uL10 family. As to quaternary structure, part of the ribosomal stalk of the 50S ribosomal subunit. The N-terminus interacts with L11 and the large rRNA to form the base of the stalk. The C-terminus forms an elongated spine to which L12 dimers bind in a sequential fashion forming a multimeric L10(L12)X complex.

Functionally, forms part of the ribosomal stalk, playing a central role in the interaction of the ribosome with GTP-bound translation factors. The chain is Large ribosomal subunit protein uL10 from Helicobacter pylori (strain G27).